A 197-amino-acid polypeptide reads, in one-letter code: Signal-regulatory protein delta (197 aa).

A signal peptide spans 1 to 29; sequence MPIPASPLHPPLPSLLLYLLLELAGVTHV. Residues 31 to 135 enclose the Ig-like V-type domain; sequence HVQQTEMSQT…IKEYQSGRGT (105 aa). Cysteine 51 and cysteine 117 are oxidised to a cystine. Residues 139–158 form a disordered region; it reads VTEQNPRPPKNRPAGRAGSR. Asparagine 174 carries an N-linked (GlcNAc...) asparagine glycan.

The protein localises to the secreted. This Homo sapiens (Human) protein is Signal-regulatory protein delta (SIRPD).